The primary structure comprises 146 residues: Large ribosomal subunit protein uL15 (146 aa).

Residues 1–18 are compositionally biased toward basic and acidic residues; it reads MKLHELKAAEGTRKERNR. The tract at residues 1–58 is disordered; sequence MKLHELKAAEGTRKERNRVGRGMSSGNGKTSGRGHKGQKARSGGGVRPGFEGGQMPLF. Positions 42–52 are enriched in gly residues; the sequence is SGGGVRPGFEG.

This sequence belongs to the universal ribosomal protein uL15 family. Part of the 50S ribosomal subunit.

Functionally, binds to the 23S rRNA. The sequence is that of Large ribosomal subunit protein uL15 from Oceanobacillus iheyensis (strain DSM 14371 / CIP 107618 / JCM 11309 / KCTC 3954 / HTE831).